Reading from the N-terminus, the 290-residue chain is Tubulin beta-4B chain (290 aa).

The MREI motif signature appears at 1–4 (MREI). GTP is bound at residue Gln11. Residue Thr55 is modified to Phosphothreonine. An N6-acetyllysine modification is found at Lys58. Residues Glu69, Ser138, Gly142, Thr143, Gly144, and Asn172 each contribute to the GTP site. Residue Glu69 participates in Mg(2+) binding.

This sequence belongs to the tubulin family. In terms of assembly, dimer of alpha and beta chains. A typical microtubule is a hollow water-filled tube with an outer diameter of 25 nm and an inner diameter of 15 nM. Alpha-beta heterodimers associate head-to-tail to form protofilaments running lengthwise along the microtubule wall with the beta-tubulin subunit facing the microtubule plus end conferring a structural polarity. Microtubules usually have 13 protofilaments but different protofilament numbers can be found in some organisms and specialized cells. Component of sperm flagellar doublet microtubules. Requires Mg(2+) as cofactor. Some glutamate residues at the C-terminus are polyglycylated, resulting in polyglycine chains on the gamma-carboxyl group. Glycylation is mainly limited to tubulin incorporated into axonemes (cilia and flagella) whereas glutamylation is prevalent in neuronal cells, centrioles, axonemes, and the mitotic spindle. Both modifications can coexist on the same protein on adjacent residues, and lowering polyglycylation levels increases polyglutamylation, and reciprocally. Cilia and flagella glycylation is required for their stability and maintenance. Flagella glycylation controls sperm motility. Post-translationally, some glutamate residues at the C-terminus are polyglutamylated, resulting in polyglutamate chains on the gamma-carboxyl group. Polyglutamylation plays a key role in microtubule severing by spastin (SPAST). SPAST preferentially recognizes and acts on microtubules decorated with short polyglutamate tails: severing activity by SPAST increases as the number of glutamates per tubulin rises from one to eight, but decreases beyond this glutamylation threshold. Glutamylation is also involved in cilia motility.

The protein resides in the cytoplasm. The protein localises to the cytoskeleton. It is found in the flagellum axoneme. Its function is as follows. Tubulin is the major constituent of microtubules, a cylinder consisting of laterally associated linear protofilaments composed of alpha- and beta-tubulin heterodimers. Microtubules grow by the addition of GTP-tubulin dimers to the microtubule end, where a stabilizing cap forms. Below the cap, tubulin dimers are in GDP-bound state, owing to GTPase activity of alpha-tubulin. The sequence is that of Tubulin beta-4B chain (TUBB4B) from Mesocricetus auratus (Golden hamster).